Consider the following 94-residue polypeptide: Large ribosomal subunit protein eL33 (94 aa).

It belongs to the eukaryotic ribosomal protein eL33 family.

The sequence is that of Large ribosomal subunit protein eL33 from Aeropyrum pernix (strain ATCC 700893 / DSM 11879 / JCM 9820 / NBRC 100138 / K1).